The following is an 853-amino-acid chain: DNA mismatch repair protein MutS (853 aa).

614–621 (GPNMGGKS) lines the ATP pocket.

It belongs to the DNA mismatch repair MutS family.

Functionally, this protein is involved in the repair of mismatches in DNA. It is possible that it carries out the mismatch recognition step. This protein has a weak ATPase activity. In Cronobacter sakazakii (strain ATCC BAA-894) (Enterobacter sakazakii), this protein is DNA mismatch repair protein MutS.